The following is a 213-amino-acid chain: uncharacterized protein (213 aa).

Transmembrane regions (helical) follow at residues 26–46 (FINF…GLKV), 112–132 (ASYI…AGIW), and 136–156 (AGLA…SFLI).

Its subcellular location is the cell membrane. This is an uncharacterized protein from Haemophilus influenzae (strain ATCC 51907 / DSM 11121 / KW20 / Rd).